The primary structure comprises 213 residues: Orotate phosphoribosyltransferase (213 aa).

Lys26 provides a ligand contact to 5-phospho-alpha-D-ribose 1-diphosphate. 34–35 (FF) is an orotate binding site. 5-phospho-alpha-D-ribose 1-diphosphate-binding positions include 72–73 (YK), Arg99, Lys100, Lys103, His105, and 124–132 (DDVITAGTS). Orotate-binding residues include Thr128 and Arg156.

The protein belongs to the purine/pyrimidine phosphoribosyltransferase family. PyrE subfamily. In terms of assembly, homodimer. Requires Mg(2+) as cofactor.

The enzyme catalyses orotidine 5'-phosphate + diphosphate = orotate + 5-phospho-alpha-D-ribose 1-diphosphate. It functions in the pathway pyrimidine metabolism; UMP biosynthesis via de novo pathway; UMP from orotate: step 1/2. Catalyzes the transfer of a ribosyl phosphate group from 5-phosphoribose 1-diphosphate to orotate, leading to the formation of orotidine monophosphate (OMP). This chain is Orotate phosphoribosyltransferase, found in Methylococcus capsulatus (strain ATCC 33009 / NCIMB 11132 / Bath).